A 456-amino-acid polypeptide reads, in one-letter code: UDP-N-acetylglucosamine 1-carboxyvinyltransferase (456 aa).

34-35 (KN) provides a ligand contact to phosphoenolpyruvate. Arg-104 is a binding site for UDP-N-acetyl-alpha-D-glucosamine. Catalysis depends on Cys-128, which acts as the Proton donor. 2-(S-cysteinyl)pyruvic acid O-phosphothioketal is present on Cys-128. Positions 319 and 341 each coordinate UDP-N-acetyl-alpha-D-glucosamine.

The protein belongs to the EPSP synthase family. MurA subfamily.

The protein localises to the cytoplasm. It catalyses the reaction phosphoenolpyruvate + UDP-N-acetyl-alpha-D-glucosamine = UDP-N-acetyl-3-O-(1-carboxyvinyl)-alpha-D-glucosamine + phosphate. Its pathway is cell wall biogenesis; peptidoglycan biosynthesis. In terms of biological role, cell wall formation. Adds enolpyruvyl to UDP-N-acetylglucosamine. This chain is UDP-N-acetylglucosamine 1-carboxyvinyltransferase, found in Prochlorococcus marinus (strain AS9601).